The sequence spans 393 residues: Putative bacilysin exporter BacE (393 aa).

10 consecutive transmembrane segments (helical) span residues 11–31 (LLFG…ALLI), 43–63 (SGVI…GVLV), 69–89 (VKIM…LTFL), 92–112 (GEYP…GVFF), 133–155 (LFAK…FLLG), 160–177 (LAVA…FFIS), 215–235 (MFTM…FPIV), 244–264 (IGNF…AALV), 287–307 (ALFL…LFFI), and 353–373 (IVDA…LFLH).

The protein belongs to the major facilitator superfamily.

The protein resides in the cell membrane. Part of the bacilysin biosynthesis operon. May be involved in self-resistance to bacilysin by permitting efflux of this antibiotic. This chain is Putative bacilysin exporter BacE (bacE), found in Bacillus subtilis.